Consider the following 493-residue polypeptide: Ectonucleotide pyrophosphatase/phosphodiesterase 2 (493 aa).

Over 1–28 (MLLFEQPVDLEKNNEDDTNIKPFAISRH) the chain is Cytoplasmic. Residues 29–45 (FLLKLLLCGIILIELLL) form a helical; Signal-anchor for type II membrane protein membrane-spanning segment. The Extracellular portion of the chain corresponds to 46–493 (YSKCPKPIDN…KTKKEKSLLQ (448 aa)). N-linked (GlcNAc...) asparagine glycosylation is found at Asn-62, Asn-69, and Asn-112. The interval 76–438 (TLTILISIDG…IGIMGTHGYN (363 aa)) is phosphodiesterase. Thr-127 functions as the Nucleophile in the catalytic mechanism. Asn-153 and Asn-441 each carry an N-linked (GlcNAc...) asparagine glycan.

Belongs to the nucleotide pyrophosphatase/phosphodiesterase family. Autophosphorylated as part of the catalytic cycle of phosphodiesterase/pyrophosphatase activity.

It is found in the membrane. It catalyses the reaction Hydrolytically removes 5'-nucleotides successively from the 3'-hydroxy termini of 3'-hydroxy-terminated oligonucleotides.. It carries out the reaction a ribonucleoside 5'-triphosphate + H2O = a ribonucleoside 5'-phosphate + diphosphate + H(+). The catalysed reaction is a 2'-deoxyribonucleoside 5'-triphosphate + H2O = a 2'-deoxyribonucleoside 5'-phosphate + diphosphate + H(+). Its function is as follows. Mediates extracellular nucleotide derived phosphate hydrolysis along with NPP1 and PHO5. The chain is Ectonucleotide pyrophosphatase/phosphodiesterase 2 (NPP2) from Saccharomyces cerevisiae (strain ATCC 204508 / S288c) (Baker's yeast).